The primary structure comprises 529 residues: ATP synthase F(1) complex subunit beta, mitochondrial (529 aa).

The transit peptide at 1-47 (MLGFVGRVAAAPASGALRRLTPSASLPPAQLLLRAAPTAVHPVRDYA) directs the protein to the mitochondrion. Residue serine 106 is glycosylated (O-linked (GlcNAc) serine). Lysine 124, lysine 133, and lysine 161 each carry N6-acetyllysine; alternate. An N6-succinyllysine; alternate mark is found at lysine 124, lysine 133, and lysine 161. Lysine 198 bears the N6-acetyllysine mark. Glycine 209, valine 210, glycine 211, lysine 212, threonine 213, and valine 214 together coordinate ADP. Position 209 (glycine 209) interacts with ATP. Phosphate is bound by residues glycine 209, valine 210, glycine 211, lysine 212, and threonine 213. Glycine 211, lysine 212, threonine 213, and valine 214 together coordinate ATP. Threonine 213 contacts Mg(2+). Glutamate 238 contributes to the Mg(2+) binding site. Residue arginine 239 coordinates ATP. An N6-acetyllysine; alternate mark is found at lysine 259 and lysine 264. N6-succinyllysine; alternate occurs at positions 259 and 264. Phosphothreonine is present on threonine 312. At serine 415 the chain carries Phosphoserine. Position 426 is an N6-acetyllysine (lysine 426). Serine 433 carries the post-translational modification Phosphoserine. 2 positions are modified to N6-acetyllysine: lysine 480 and lysine 485. Lysine 522 carries the post-translational modification N6-acetyllysine; alternate. Lysine 522 is subject to N6-succinyllysine; alternate. Serine 529 is subject to Phosphoserine.

The protein belongs to the ATPase alpha/beta chains family. Homotrimer. Component of the ATP synthase complex composed at least of ATP5F1A/subunit alpha, ATP5F1B/subunit beta, ATP5MC1/subunit c (homooctomer), MT-ATP6/subunit a, MT-ATP8/subunit 8, ATP5ME/subunit e, ATP5MF/subunit f, ATP5MG/subunit g, ATP5MK/subunit k, ATP5MJ/subunit j, ATP5F1C/subunit gamma, ATP5F1D/subunit delta, ATP5F1E/subunit epsilon, ATP5PF/subunit F6, ATP5PB/subunit b, ATP5PD/subunit d, ATP5PO/subunit OSCP. ATP synthase complex consists of a soluble F(1) head domain (subunits alpha(3) and beta(3)) - the catalytic core - and a membrane F(0) domain - the membrane proton channel (subunits c, a, 8, e, f, g, k and j). These two domains are linked by a central stalk (subunits gamma, delta, and epsilon) rotating inside the F1 region and a stationary peripheral stalk (subunits F6, b, d, and OSCP). Interacts with PPIF. Interacts with BCL2L1 isoform BCL-X(L); the interaction mediates the association of BCL2L1 isoform BCL-X(L) with the mitochondrial membrane F(1)F(0) ATP synthase and enhances neurons metabolic efficiency. Interacts with CLN5 and PPT1. Interacts with S100A1; this interaction increases F1-ATPase activity. Interacts with MTLN. Interacts with TTC5/STRAP; the interaction results in decreased mitochondrial ATP production. Mg(2+) is required as a cofactor.

It localises to the mitochondrion inner membrane. The catalysed reaction is ATP + H2O + 4 H(+)(in) = ADP + phosphate + 5 H(+)(out). Its function is as follows. Catalytic subunit beta, of the mitochondrial membrane ATP synthase complex (F(1)F(0) ATP synthase or Complex V) that produces ATP from ADP in the presence of a proton gradient across the membrane which is generated by electron transport complexes of the respiratory chain. ATP synthase complex consist of a soluble F(1) head domain - the catalytic core - and a membrane F(1) domain - the membrane proton channel. These two domains are linked by a central stalk rotating inside the F(1) region and a stationary peripheral stalk. During catalysis, ATP synthesis in the catalytic domain of F(1) is coupled via a rotary mechanism of the central stalk subunits to proton translocation. In vivo, can only synthesize ATP although its ATP hydrolase activity can be activated artificially in vitro. With the subunit alpha (ATP5F1A), forms the catalytic core in the F(1) domain. The sequence is that of ATP synthase F(1) complex subunit beta, mitochondrial from Homo sapiens (Human).